The primary structure comprises 353 residues: Photosystem II protein D1 (353 aa).

Threonine 2 is subject to N-acetylthreonine. The residue at position 2 (threonine 2) is a Phosphothreonine. Helical transmembrane passes span 29–46, 118–133, and 142–156; these read YIGW…TATS, HFLL…EWEL, and WIAV…AATA. Position 118 (histidine 118) interacts with chlorophyll a. Position 126 (tyrosine 126) interacts with pheophytin a. The [CaMn4O5] cluster site is built by aspartate 170 and glutamate 189. Residues 197-218 traverse the membrane as a helical segment; the sequence is FHMLGVAGVFGGSLFSAMHGSL. Position 198 (histidine 198) interacts with chlorophyll a. Residues histidine 215 and 264 to 265 contribute to the a quinone site; that span reads SF. Histidine 215 contacts Fe cation. A Fe cation-binding site is contributed by histidine 272. Residues 274-288 form a helical membrane-spanning segment; that stretch reads FLAAWPVVGIWFTAL. Residues histidine 332, glutamate 333, aspartate 342, and alanine 344 each coordinate [CaMn4O5] cluster. The propeptide occupies 345 to 353; that stretch reads AVEVPSING.

The protein belongs to the reaction center PufL/M/PsbA/D family. As to quaternary structure, PSII is composed of 1 copy each of membrane proteins PsbA, PsbB, PsbC, PsbD, PsbE, PsbF, PsbH, PsbI, PsbJ, PsbK, PsbL, PsbM, PsbT, PsbX, PsbY, PsbZ, Psb30/Ycf12, at least 3 peripheral proteins of the oxygen-evolving complex and a large number of cofactors. It forms dimeric complexes. The cofactor is The D1/D2 heterodimer binds P680, chlorophylls that are the primary electron donor of PSII, and subsequent electron acceptors. It shares a non-heme iron and each subunit binds pheophytin, quinone, additional chlorophylls, carotenoids and lipids. D1 provides most of the ligands for the Mn4-Ca-O5 cluster of the oxygen-evolving complex (OEC). There is also a Cl(-1) ion associated with D1 and D2, which is required for oxygen evolution. The PSII complex binds additional chlorophylls, carotenoids and specific lipids.. Tyr-161 forms a radical intermediate that is referred to as redox-active TyrZ, YZ or Y-Z. Post-translationally, C-terminally processed by CTPA; processing is essential to allow assembly of the oxygen-evolving complex and thus photosynthetic growth.

The protein localises to the plastid. Its subcellular location is the chloroplast thylakoid membrane. It carries out the reaction 2 a plastoquinone + 4 hnu + 2 H2O = 2 a plastoquinol + O2. Its function is as follows. Photosystem II (PSII) is a light-driven water:plastoquinone oxidoreductase that uses light energy to abstract electrons from H(2)O, generating O(2) and a proton gradient subsequently used for ATP formation. It consists of a core antenna complex that captures photons, and an electron transfer chain that converts photonic excitation into a charge separation. The D1/D2 (PsbA/PsbD) reaction center heterodimer binds P680, the primary electron donor of PSII as well as several subsequent electron acceptors. The chain is Photosystem II protein D1 from Triticum aestivum (Wheat).